Consider the following 62-residue polypeptide: Mu-elapitoxin-Na1a (62 aa).

4 cysteine pairs are disulfide-bonded: Cys3-Cys22, Cys15-Cys40, Cys44-Cys55, and Cys56-Cys61.

The protein belongs to the three-finger toxin family. Short-chain subfamily. Orphan group XV sub-subfamily. In terms of tissue distribution, expressed by the venom gland.

It is found in the secreted. In terms of biological role, potent inhibitor of human Nav1.8/SCN10A (IC(50)=141-380 nM). Is highly selective for this channel and acts in a reversible manner. Shows a depolarizing shift of activation and hyperpolarizing shift of inactivation. In contrast to the very similar cytotoxin A5 (AC P62375), does not seem to bind integrin alpha-V/beta-3, since it does not promote or inhibit the proliferation of HUVECs and C-PAE cells. In vivo, in rodent models of inflammatory and neuropathic pain, it alleviates nociceptive behaviors more potently than does morphine. It displays no evident cytotoxic, hemolytic and cardiotoxic activities and produces no obvious adverse responses in mice even at a dose 30-fold higher than that producing a significant analgesic effect. This is Mu-elapitoxin-Na1a from Naja atra (Chinese cobra).